A 253-amino-acid polypeptide reads, in one-letter code: CTP:phosphoglutamine cytidylyltransferase (253 aa).

It carries out the reaction N(5)-phospho-L-glutamine + CTP + H(+) = N(5)-(cytidine 5'-diphosphoramidyl)-L-glutamine + diphosphate. It functions in the pathway capsule biogenesis; capsule polysaccharide biosynthesis. In terms of biological role, involved in the biosynthesis of the O-methyl phosphoramidate (MeOPN) group found on the capsular polysaccharide (CPS) of C.jejuni. Catalyzes the formation of CDP-L-glutamine from CTP and L-glutamine phosphate. In the presence of MnCTP, catalyzes the displacement of pyrophosphate from CTP using phosphoramidate, methyl phosphate, methyl phosphonate, phosphate, arsenate, ethanolamine phosphate, (R/S)-glycerol-1-phosphate, glycerol-2-phosphate, serinol phosphate, L-serine phosphate and 3-phospho-D-glycerate as substrate in addition to L-glutamine phosphate. This chain is CTP:phosphoglutamine cytidylyltransferase, found in Campylobacter jejuni subsp. jejuni serotype O:2 (strain ATCC 700819 / NCTC 11168).